The sequence spans 149 residues: Histone H3-like 1 (149 aa).

The span at 1-19 (MARPRKEAPQRNLDRDENA) shows a compositional bias: basic and acidic residues. Positions 1–58 (MARPRKEAPQRNLDRDENARQQPTEEPQDEAPRNQGRQQQQQRPPAAPRRPRRFRPGT) are disordered. Residues 33 to 44 (RNQGRQQQQQRP) are compositionally biased toward low complexity.

This sequence belongs to the histone H3 family. In terms of assembly, the nucleosome is a histone octamer containing two molecules each of H2A, H2B, H3 and H4 assembled in one H3-H4 heterotetramer and two H2A-H2B heterodimers. The octamer wraps approximately 147 bp of DNA. As to expression, pollen specific.

The protein resides in the nucleus. The protein localises to the chromosome. Its function is as follows. Core component of nucleosome. Nucleosomes wrap and compact DNA into chromatin, limiting DNA accessibility to the cellular machineries which require DNA as a template. Histones thereby play a central role in transcription regulation, DNA repair, DNA replication and chromosomal stability. DNA accessibility is regulated via a complex set of post-translational modifications of histones, also called histone code, and nucleosome remodeling. This is Histone H3-like 1 (gH3) from Lilium longiflorum (Trumpet lily).